Consider the following 57-residue polypeptide: Large ribosomal subunit protein bL32 (57 aa).

Residues 1 to 19 are compositionally biased toward basic residues; that stretch reads MATPKRRMSRANTRSRRSQ. A disordered region spans residues 1-20; the sequence is MATPKRRMSRANTRSRRSQW.

The protein belongs to the bacterial ribosomal protein bL32 family.

The chain is Large ribosomal subunit protein bL32 from Mycobacterium marinum (strain ATCC BAA-535 / M).